The primary structure comprises 493 residues: Acetyl-coenzyme A carboxylase carboxyl transferase subunit beta (493 aa).

Positions 231 to 493 constitute a CoA carboxyltransferase N-terminal domain; sequence LWVQCENCYG…FKLHAFFPLN (263 aa). Zn(2+)-binding residues include cysteine 235, cysteine 238, cysteine 254, and cysteine 257. The segment at 235-257 adopts a C4-type zinc-finger fold; the sequence is CENCYGLNYKKFLKSKINLCEQC.

This sequence belongs to the AccD/PCCB family. Acetyl-CoA carboxylase is a heterohexamer composed of biotin carboxyl carrier protein, biotin carboxylase and 2 subunits each of ACCase subunit alpha and ACCase plastid-coded subunit beta (accD). The cofactor is Zn(2+).

The protein localises to the plastid stroma. The catalysed reaction is N(6)-carboxybiotinyl-L-lysyl-[protein] + acetyl-CoA = N(6)-biotinyl-L-lysyl-[protein] + malonyl-CoA. It functions in the pathway lipid metabolism; malonyl-CoA biosynthesis; malonyl-CoA from acetyl-CoA: step 1/1. Functionally, component of the acetyl coenzyme A carboxylase (ACC) complex. Biotin carboxylase (BC) catalyzes the carboxylation of biotin on its carrier protein (BCCP) and then the CO(2) group is transferred by the transcarboxylase to acetyl-CoA to form malonyl-CoA. The sequence is that of Acetyl-coenzyme A carboxylase carboxyl transferase subunit beta from Epifagus virginiana (Beechdrops).